The chain runs to 289 residues: DNA repair protein rad14 (289 aa).

The Zn(2+) site is built by cysteine 116, cysteine 119, cysteine 137, and cysteine 140. A zinc finger spans residues 116 to 140 (CFECDSIELDTKYFDIFHCRVCHTC).

It belongs to the XPA family. As to quaternary structure, interacts with hrq1.

It is found in the nucleus. In terms of biological role, involved in nucleotide excision repair (NER). Functional in repair of ultraviolet radiation induced damages and in mitotic mutation avoidance. Binds damaged DNA. Binds specifically to base-base mismatches or small insertion/deletion loops with unpaired nucleotides. Maintains GT repeat stability. Functions as a part of the short-patch excision repair system. In Schizosaccharomyces pombe (strain 972 / ATCC 24843) (Fission yeast), this protein is DNA repair protein rad14.